The following is a 612-amino-acid chain: MSASWADVADSEKAVSQSKPPYVPPHLRNRPSEPVAAPLPQNDHAGYGGQPAGSRWAPPSSGGGGASGGGYRNDGGRTGYGYGAGGGGGGGGGWNNRSGGWDRREREVNPFGDDAELEPVFTEQENTGINFDAYEDIPVETSGGDVPPPVNTFADIDLGDALNLNIRRCKYVRPTPVQRHAIPILLAERDLMACAQTGSGKTAAFCFPIISGIMKDQHVERPRGSRAVYPFAVILSPTRELACQIHDEAKKFSYQTGVKVVVAYGGTPIHQQLRELERGCDILVATPGRLNDLLERARVSMQMIRFLALDEADRMLDMGFEPQIRKIVEQMDMPPRGVRQTMLFSATFPSQIQRLAADFMSNYIFLAVGRVGSSTDLITQRVEFVQESDKRSHLMDLLHAQRETQDKQSLTLVFVETKRGADTLENWLCMNEFPATSIHGDRTQQEREVALRSFKTGRTPILVATDVAARGLDIPHVAHVVNFDLPNDIDDYVHRIGRTGRAGKSGIATAFFNENNAQLARSLAELMQEANQEVPEWLTRYASRASFGGGKKRSGGRFGGRDFRREGSYSRGGGGGGGGGGSDYYGGGGYGGGGYGGAPSGGYGAGVTSAWD.

Disordered regions lie at residues 1 to 70 and 83 to 104; these read MSAS…SGGG and GAGG…WDRR. Ser2 is modified (N-acetylserine). 2 stretches are compositionally biased toward gly residues: residues 61-70 and 83-94; these read SGGGGASGGG and GAGGGGGGGGGW. Positions 151–179 match the Q motif motif; that stretch reads NTFADIDLGDALNLNIRRCKYVRPTPVQR. A Helicase ATP-binding domain is found at 182 to 366; that stretch reads IPILLAERDL…ADFMSNYIFL (185 aa). An ATP-binding site is contributed by 195 to 202; that stretch reads AQTGSGKT. Residues 310-313 carry the DEAD box motif; sequence DEAD. One can recognise a Helicase C-terminal domain in the interval 377–542; that stretch reads LITQRVEFVQ…EVPEWLTRYA (166 aa). The segment at 547 to 583 is disordered; sequence FGGGKKRSGGRFGGRDFRREGSYSRGGGGGGGGGGSD. The segment covering 559 to 568 has biased composition (basic and acidic residues); that stretch reads GGRDFRREGS. Positions 570 to 583 are enriched in gly residues; sequence SRGGGGGGGGGGSD.

This sequence belongs to the DEAD box helicase family. DDX3/DED1 subfamily.

The catalysed reaction is ATP + H2O = ADP + phosphate + H(+). In Arabidopsis thaliana (Mouse-ear cress), this protein is DEAD-box ATP-dependent RNA helicase 11 (RH11).